The chain runs to 327 residues: tRNA uridine(34) hydroxylase (327 aa).

The 95-residue stretch at 123–217 folds into the Rhodanese domain; sequence SDPEVLVVDT…YLEEVPQEQS (95 aa). The Cysteine persulfide intermediate role is filled by Cys-177.

The protein belongs to the TrhO family.

It carries out the reaction uridine(34) in tRNA + AH2 + O2 = 5-hydroxyuridine(34) in tRNA + A + H2O. In terms of biological role, catalyzes oxygen-dependent 5-hydroxyuridine (ho5U) modification at position 34 in tRNAs. This is tRNA uridine(34) hydroxylase from Vibrio cholerae serotype O1 (strain ATCC 39315 / El Tor Inaba N16961).